Here is a 555-residue protein sequence, read N- to C-terminus: Protection of telomeres protein 1 (555 aa).

It belongs to the telombin family. Self-associates. Interacts with ccq1, poz1 and tpz1.

The protein localises to the nucleus. It localises to the chromosome. It is found in the telomere. Its function is as follows. Single-stranded telomeric DNA-binding protein that is required to protect the 3'-end telomeric overhang. It binds the consensus sequence 5'-GGTTAC-3'. Regulates telomerase and telomere length. The sequence is that of Protection of telomeres protein 1 (pot1) from Schizosaccharomyces pombe (strain 972 / ATCC 24843) (Fission yeast).